We begin with the raw amino-acid sequence, 400 residues long: Tryptophan synthase beta chain (400 aa).

K92 carries the post-translational modification N6-(pyridoxal phosphate)lysine.

This sequence belongs to the TrpB family. Tetramer of two alpha and two beta chains. Requires pyridoxal 5'-phosphate as cofactor.

It carries out the reaction (1S,2R)-1-C-(indol-3-yl)glycerol 3-phosphate + L-serine = D-glyceraldehyde 3-phosphate + L-tryptophan + H2O. Its pathway is amino-acid biosynthesis; L-tryptophan biosynthesis; L-tryptophan from chorismate: step 5/5. In terms of biological role, the beta subunit is responsible for the synthesis of L-tryptophan from indole and L-serine. The sequence is that of Tryptophan synthase beta chain from Neisseria meningitidis serogroup A / serotype 4A (strain DSM 15465 / Z2491).